The following is a 441-amino-acid chain: Tryptophan aminotransferase-related protein 1 (441 aa).

Residues tyrosine 110, 152–153 (ST), asparagine 219, 239–242 (DLAY), 262–265 (TVSK), and arginine 273 contribute to the pyridoxal 5'-phosphate site. Lysine 265 carries the post-translational modification N6-(pyridoxal phosphate)lysine.

This sequence belongs to the alliinase family. Pyridoxal 5'-phosphate serves as cofactor. As to expression, highly expressed in anthers. Expressed at low levels in ovaries.

The enzyme catalyses L-tryptophan + 2-oxoglutarate = indole-3-pyruvate + L-glutamate. The protein operates within plant hormone metabolism; auxin biosynthesis. Probable tryptophan aminotransferase that may be involved in the regulation of auxin production in developing rice grains. The sequence is that of Tryptophan aminotransferase-related protein 1 from Oryza sativa subsp. japonica (Rice).